The chain runs to 510 residues: Light-independent protochlorophyllide reductase subunit B (510 aa).

Position 36 (Asp36) interacts with [4Fe-4S] cluster. Asp296 acts as the Proton donor in catalysis. Substrate is bound at residue 431-432; it reads GM.

It belongs to the ChlB/BchB/BchZ family. Protochlorophyllide reductase is composed of three subunits; ChlL, ChlN and ChlB. Forms a heterotetramer of two ChlB and two ChlN subunits. The cofactor is [4Fe-4S] cluster.

It localises to the plastid. The protein resides in the chloroplast. It carries out the reaction chlorophyllide a + oxidized 2[4Fe-4S]-[ferredoxin] + 2 ADP + 2 phosphate = protochlorophyllide a + reduced 2[4Fe-4S]-[ferredoxin] + 2 ATP + 2 H2O. It participates in porphyrin-containing compound metabolism; chlorophyll biosynthesis (light-independent). Component of the dark-operative protochlorophyllide reductase (DPOR) that uses Mg-ATP and reduced ferredoxin to reduce ring D of protochlorophyllide (Pchlide) to form chlorophyllide a (Chlide). This reaction is light-independent. The NB-protein (ChlN-ChlB) is the catalytic component of the complex. The chain is Light-independent protochlorophyllide reductase subunit B from Physcomitrium patens (Spreading-leaved earth moss).